The chain runs to 444 residues: Glutamate--tRNA ligase 1 (444 aa).

Positions 8 to 18 (PSPTGFLHVGN) match the 'HIGH' region motif. Positions 239–243 (KISKR) match the 'KMSKS' region motif. K242 serves as a coordination point for ATP.

This sequence belongs to the class-I aminoacyl-tRNA synthetase family. Glutamate--tRNA ligase type 1 subfamily. In terms of assembly, monomer.

The protein localises to the cytoplasm. The catalysed reaction is tRNA(Glu) + L-glutamate + ATP = L-glutamyl-tRNA(Glu) + AMP + diphosphate. In terms of biological role, catalyzes the attachment of glutamate to tRNA(Glu) in a two-step reaction: glutamate is first activated by ATP to form Glu-AMP and then transferred to the acceptor end of tRNA(Glu). The sequence is that of Glutamate--tRNA ligase 1 from Zymomonas mobilis subsp. mobilis (strain ATCC 31821 / ZM4 / CP4).